The chain runs to 705 residues: Kinesin-like protein KIF2A (705 aa).

Residues 65 to 185 form a disordered region; the sequence is DLVPDEDIEP…QQELREKRAQ (121 aa). Position 75 is a phosphoserine (Ser-75). Phosphothreonine is present on Thr-96. Position 99 is a phosphoserine (Ser-99). Lys-101 bears the N6-acetyllysine mark. Positions 122 to 139 are enriched in polar residues; sequence LPEQSSSAQQNGSVSDIS. Ser-134 and Ser-139 each carry phosphoserine. A coiled-coil region spans residues 153-186; that stretch reads RRKSNCVKEVEKLQEKREKRRLQQQELREKRAQD. The span at 158 to 185 shows a compositional bias: basic and acidic residues; sequence CVKEVEKLQEKREKRRLQQQELREKRAQ. One can recognise a Kinesin motor domain in the interval 222–552; sequence RICVCVRKRP…LRYANRVKEL (331 aa). 312-319 is a binding site for ATP; the sequence is GQTGSGKT. Gln-572 bears the Phosphoserine mark. Residues 659 to 698 adopt a coiled-coil conformation; it reads ATQLEAILEQKIDILTELRDKVKSFRAALQEEEQASKQIN.

The protein belongs to the TRAFAC class myosin-kinesin ATPase superfamily. Kinesin family. MCAK/KIF2 subfamily. As to quaternary structure, interacts with AURKA and PLK1. Interacts with PSRC1. Interacts with MCRS1; the interaction enhances recruitment of KIF2A to the minus ends of spindle microtubules which promotes chromosome alignment.

The protein localises to the cytoplasm. Its subcellular location is the cytoskeleton. It localises to the microtubule organizing center. The protein resides in the centrosome. It is found in the spindle pole. The protein localises to the spindle. Its function is as follows. Plus end-directed microtubule-dependent motor required for normal brain development. May regulate microtubule dynamics during axonal growth. Required for normal progression through mitosis. Required for normal congress of chromosomes at the metaphase plate. Required for normal spindle dynamics during mitosis. Promotes spindle turnover. Implicated in formation of bipolar mitotic spindles. Has microtubule depolymerization activity. In Rattus norvegicus (Rat), this protein is Kinesin-like protein KIF2A.